The following is a 426-amino-acid chain: 3-phosphoshikimate 1-carboxyvinyltransferase (426 aa).

Lysine 22, serine 23, and arginine 27 together coordinate 3-phosphoshikimate. Lysine 22 is a binding site for phosphoenolpyruvate. Residues glycine 96 and arginine 124 each coordinate phosphoenolpyruvate. 3-phosphoshikimate contacts are provided by serine 170, serine 171, glutamine 172, serine 198, aspartate 314, asparagine 337, and lysine 341. Phosphoenolpyruvate is bound at residue glutamine 172. Catalysis depends on aspartate 314, which acts as the Proton acceptor. Arginine 345, arginine 387, and lysine 412 together coordinate phosphoenolpyruvate.

The protein belongs to the EPSP synthase family. In terms of assembly, monomer.

It localises to the cytoplasm. The catalysed reaction is 3-phosphoshikimate + phosphoenolpyruvate = 5-O-(1-carboxyvinyl)-3-phosphoshikimate + phosphate. The protein operates within metabolic intermediate biosynthesis; chorismate biosynthesis; chorismate from D-erythrose 4-phosphate and phosphoenolpyruvate: step 6/7. In terms of biological role, catalyzes the transfer of the enolpyruvyl moiety of phosphoenolpyruvate (PEP) to the 5-hydroxyl of shikimate-3-phosphate (S3P) to produce enolpyruvyl shikimate-3-phosphate and inorganic phosphate. The sequence is that of 3-phosphoshikimate 1-carboxyvinyltransferase from Vibrio campbellii (strain ATCC BAA-1116).